The following is an 88-amino-acid chain: UPF0250 protein swp_3927 (88 aa).

The protein belongs to the UPF0250 family.

This is UPF0250 protein swp_3927 from Shewanella piezotolerans (strain WP3 / JCM 13877).